We begin with the raw amino-acid sequence, 151 residues long: D-aminoacyl-tRNA deacylase (151 aa).

Residues 137 to 138 (GP) carry the Gly-cisPro motif, important for rejection of L-amino acids motif.

Belongs to the DTD family. Homodimer.

It localises to the cytoplasm. It carries out the reaction glycyl-tRNA(Ala) + H2O = tRNA(Ala) + glycine + H(+). It catalyses the reaction a D-aminoacyl-tRNA + H2O = a tRNA + a D-alpha-amino acid + H(+). Its function is as follows. An aminoacyl-tRNA editing enzyme that deacylates mischarged D-aminoacyl-tRNAs. Also deacylates mischarged glycyl-tRNA(Ala), protecting cells against glycine mischarging by AlaRS. Acts via tRNA-based rather than protein-based catalysis; rejects L-amino acids rather than detecting D-amino acids in the active site. By recycling D-aminoacyl-tRNA to D-amino acids and free tRNA molecules, this enzyme counteracts the toxicity associated with the formation of D-aminoacyl-tRNA entities in vivo and helps enforce protein L-homochirality. In Geobacter metallireducens (strain ATCC 53774 / DSM 7210 / GS-15), this protein is D-aminoacyl-tRNA deacylase.